The primary structure comprises 162 residues: MSKPGGHSRHGRRDGIDPVLRSRARRRALQAVYAWQISGGFAKQVIAQFAHEQAHEVADLAYFENLVEGVLSNRAELDTALTPYLDRSVEEVDAIERAVLRLAAYELLYRQDVPYRVVINEAIETAKRFGSEHGHTYVNGVLDRAAVEWRKVESGASGASGA.

The protein belongs to the NusB family.

In terms of biological role, involved in transcription antitermination. Required for transcription of ribosomal RNA (rRNA) genes. Binds specifically to the boxA antiterminator sequence of the ribosomal RNA (rrn) operons. This chain is Transcription antitermination protein NusB, found in Xanthomonas euvesicatoria pv. vesicatoria (strain 85-10) (Xanthomonas campestris pv. vesicatoria).